Here is a 661-residue protein sequence, read N- to C-terminus: Arginine--tRNA ligase, cytoplasmic (661 aa).

The residue at position 1 (Met-1) is an N-acetylmethionine. A could be involved in the assembly of the multisynthetase complex region spans residues 1–73; sequence MDGLVAQCSA…AEKRRRPTKN (73 aa). L-arginine is bound by residues 201–203, His-212, Tyr-385, Asp-389, and Gln-413; that span reads SPN. The 'HIGH' region motif lies at 202-213; it reads PNIAKEMHVGHL. The interval 530–544 is interaction with tRNA; the sequence is NTAAYLLYAFTRIRS.

This sequence belongs to the class-I aminoacyl-tRNA synthetase family. In terms of assembly, interacts (via N-terminus) with AIMP1 (via N-terminus); this stimulates its catalytic activity. Interacts (via N-terminus) with LARS2 (via C-terminus). Monomer. Part of a multisubunit complex that groups tRNA ligases for Arg (RARS1), Asp (DARS1), Gln (QARS1), Ile (IARS1), Leu (LARS1), Lys (KARS1), Met (MARS1) the bifunctional ligase for Glu and Pro (EPRS1) and the auxiliary subunits AIMP1/p43, AIMP2/p38 and EEF1E1/p18. Interacts with QARS1. Part of a complex composed of RARS1, QARS1 and AIMP1.

It localises to the cytoplasm. The protein localises to the cytosol. It catalyses the reaction tRNA(Arg) + L-arginine + ATP = L-arginyl-tRNA(Arg) + AMP + diphosphate. Functionally, forms part of a macromolecular complex that catalyzes the attachment of specific amino acids to cognate tRNAs during protein synthesis. Modulates the secretion of AIMP1 and may be involved in generation of the inflammatory cytokine EMAP2 from AIMP1. The chain is Arginine--tRNA ligase, cytoplasmic (RARS1) from Cricetulus griseus (Chinese hamster).